Consider the following 502-residue polypeptide: ATP synthase subunit alpha (502 aa).

Positions 115-135 (VDGLGPINTTNTRPIESPAPG) are disordered. Residue 169–176 (GDRQTGKT) participates in ATP binding.

Belongs to the ATPase alpha/beta chains family. As to quaternary structure, F-type ATPases have 2 components, CF(1) - the catalytic core - and CF(0) - the membrane proton channel. CF(1) has five subunits: alpha(3), beta(3), gamma(1), delta(1), epsilon(1). CF(0) has three main subunits: a(1), b(2) and c(9-12). The alpha and beta chains form an alternating ring which encloses part of the gamma chain. CF(1) is attached to CF(0) by a central stalk formed by the gamma and epsilon chains, while a peripheral stalk is formed by the delta and b chains.

It localises to the cell membrane. It carries out the reaction ATP + H2O + 4 H(+)(in) = ADP + phosphate + 5 H(+)(out). Its function is as follows. Produces ATP from ADP in the presence of a proton gradient across the membrane. The alpha chain is a regulatory subunit. The chain is ATP synthase subunit alpha from Bacillus cereus (strain G9842).